The sequence spans 242 residues: MKVAAKKLATSRMRKDRAAAASPSSDIENSENPSSLASHSSSSGRMTPSKNTRSRKGVSVKDVSNHKITEFFQVRRSNRKTSKQISDEAKHALRDTVLKGTNERLLEVYKDVVKGRGIRTKVNFEKGDFVVEYRGVMMEYSEAKVIEEQYSNDEEIGSYMYFFEHNNKKWCIDATKESPWKGRLINHSVLRPNLKTKVVEIDGSHHLILVARRQIAQGEELLYDYGDRSAETIAKNPWLVNT.

The interval 1 to 61 is disordered; the sequence is MKVAAKKLAT…TRSRKGVSVK (61 aa). Low complexity predominate over residues 30–43; that stretch reads SENPSSLASHSSSS. Residues 104–226 enclose the SET domain; sequence RLLEVYKDVV…QGEELLYDYG (123 aa). S-adenosyl-L-methionine is bound by residues 114-116, Y159, and 186-187; these read KGR and NH.

It belongs to the class V-like SAM-binding methyltransferase superfamily. Histone-lysine methyltransferase family. PR/SET subfamily. As to expression, in embryos, it is expressed ubiquitously. In late embryos, it is expressed in hypodermal seam cells. In L3 and L4 larvae and thereafter, it is expressed in vulval precursor cells. In adult males, it is also expressed in 6 unidentified posterior cells.

The protein resides in the nucleus. It is found in the chromosome. The catalysed reaction is L-lysyl(20)-[histone H4] + S-adenosyl-L-methionine = N(6)-methyl-L-lysyl(20)-[histone H4] + S-adenosyl-L-homocysteine + H(+). In terms of biological role, histone methyltransferase that specifically monomethylates 'Lys-20' of histone H4 (H4K20me1). H4K20me1 is enriched on hermaphrodite X chromosomes and during mitosis. Involved in dosage compensation by repression of X-linked gene expression in hermaphrodites. Plays a role in growth and body fat regulation downstream of the TOR complex 2 pathway. The chain is Histone-lysine N-methyltransferase set-1 (set-1) from Caenorhabditis elegans.